Here is a 662-residue protein sequence, read N- to C-terminus: MSELLLELFSEEIPAFMQKNAEEGYLNIFTQIFAESAIFAKVQVFVGPRRITLYATHLPKVTLPQEEEIKGPSIESPEAAINGFCSAHNVSKLELSTKLINNQLYYFFVKKTKEREIKEILPKIIIEAINKYSWAKSMFWGDYKIKWIRPLRNILCIFDGEVLPLQFGHLTANNITYGHRLTDNKKLEVTDFKDYRNKLLENNVVLERIKREEIIKTGLLELANSQNLNIKEDARLIEEVAGLSEFPVVLLGKIAQKFLELPKEVLIASMRTHQKYFCLFDKTGNFAPYFLFVSNGRFANAELVIQGNEKVLSARLSDALYFYKQDIAKTLESRLGKLEAVTFHAKLGNLREKIEHITDICNYIAPNNKDLITAAKLCKSDLVSEMVGEFPDLQGIMGYYYAKYEGLNEEIAAAIRDHYKPQGLSDNVASGNAALLALADKLDSLVGLMIAGEAPTGSGDPYALRRQALGIIRIILENKLELNLNDLIIFSLKLYGNSADKDLITSFFEERAKFYFKNKYDILLINAVLDLNLVDTQFKLETLKEFLIEDAGKQLLNAYKRASNIIGDQKITGLVDASLFSTQPEKDLFEVVQKISPQIIDSIADKDYKRALNLLSFLLTPITSFFDNVLVNDPDPKIAQNRLSLLQNICELLNKIAKFNRL.

It belongs to the class-II aminoacyl-tRNA synthetase family. In terms of assembly, tetramer of two alpha and two beta subunits.

It is found in the cytoplasm. The enzyme catalyses tRNA(Gly) + glycine + ATP = glycyl-tRNA(Gly) + AMP + diphosphate. The polypeptide is Glycine--tRNA ligase beta subunit (Rickettsia akari (strain Hartford)).